Here is a 1444-residue protein sequence, read N- to C-terminus: DNA polymerase III PolC-type (1444 aa).

The interval 196-218 (EAVQVMQKRQAEGQNGNSSAAPL) is disordered. A compositionally biased stretch (polar residues) spans 207–216 (EGQNGNSSAA). Residues 428 to 584 (YCVFDVETTG…FDAEATAYLA (157 aa)) enclose the Exonuclease domain.

The protein belongs to the DNA polymerase type-C family. PolC subfamily.

The protein localises to the cytoplasm. The catalysed reaction is DNA(n) + a 2'-deoxyribonucleoside 5'-triphosphate = DNA(n+1) + diphosphate. Required for replicative DNA synthesis. This DNA polymerase also exhibits 3' to 5' exonuclease activity. In Listeria welshimeri serovar 6b (strain ATCC 35897 / DSM 20650 / CCUG 15529 / CIP 8149 / NCTC 11857 / SLCC 5334 / V8), this protein is DNA polymerase III PolC-type.